We begin with the raw amino-acid sequence, 316 residues long: Fe-S cluster assembly protein DRE2 (316 aa).

The segment at 7–139 (VSPPKRTLLL…PDYGDNEGAV (133 aa)) is N-terminal SAM-like domain. Positions 140 to 208 (TLKFGLKKKN…EDTLMTEEDL (69 aa)) are linker. Positions 218, 229, 232, and 234 each coordinate [2Fe-2S] cluster. The interval 218–234 (CQPKAGKRRRACKDCSC) is fe-S binding site A. Residues Cys-279, Cys-282, Cys-290, and Cys-293 each contribute to the [4Fe-4S] cluster site. 2 short sequence motifs (cx2C motif) span residues 279–282 (CGNC) and 290–293 (CDGC). The segment at 279-293 (CGNCSLGDAFRCDGC) is fe-S binding site B.

This sequence belongs to the anamorsin family. In terms of assembly, monomer. Interacts with TAH18. Interacts with MIA40. It depends on [2Fe-2S] cluster as a cofactor. The cofactor is [4Fe-4S] cluster.

It is found in the cytoplasm. It localises to the mitochondrion intermembrane space. Functionally, component of the cytosolic iron-sulfur (Fe-S) protein assembly (CIA) machinery required for the maturation of extramitochondrial Fe-S proteins. Part of an electron transfer chain functioning in an early step of cytosolic Fe-S biogenesis, facilitating the de novo assembly of a [4Fe-4S] cluster on the scaffold complex CFD1-NBP35. Electrons are transferred to DRE2 from NADPH via the FAD- and FMN-containing protein TAH18. TAH18-DRE2 are also required for the assembly of the diferric tyrosyl radical cofactor of ribonucleotide reductase (RNR), probably by providing electrons for reduction during radical cofactor maturation in the catalytic small subunit RNR2. This chain is Fe-S cluster assembly protein DRE2, found in Fusarium vanettenii (strain ATCC MYA-4622 / CBS 123669 / FGSC 9596 / NRRL 45880 / 77-13-4) (Fusarium solani subsp. pisi).